Consider the following 2890-residue polypeptide: Bifunctional DNA-directed RNA polymerase subunit beta-beta' (2890 aa).

Residues Met-1–Asp-1377 are DNA-directed RNA polymerase subunit beta. A DNA-directed RNA polymerase subunit beta' region spans residues Pro-1384–Phe-2890. Zn(2+) contacts are provided by Cys-1449, Cys-1451, Cys-1465, and Cys-1468. 3 residues coordinate Mg(2+): Asp-1849, Asp-1851, and Asp-1853. Zn(2+)-binding residues include Cys-2179, Cys-2253, Cys-2260, and Cys-2263.

This sequence in the N-terminal section; belongs to the RNA polymerase beta chain family. The protein in the C-terminal section; belongs to the RNA polymerase beta' chain family. As to quaternary structure, the RNAP catalytic core consists of 2 alpha, 1 beta/beta' and 1 omega subunit. When a sigma factor is associated with the core the holoenzyme is formed, which can initiate transcription. Requires Mg(2+) as cofactor. Zn(2+) is required as a cofactor.

The catalysed reaction is RNA(n) + a ribonucleoside 5'-triphosphate = RNA(n+1) + diphosphate. In terms of biological role, DNA-dependent RNA polymerase catalyzes the transcription of DNA into RNA using the four ribonucleoside triphosphates as substrates. The protein is Bifunctional DNA-directed RNA polymerase subunit beta-beta' (rpoBC) of Helicobacter pylori (strain Shi470).